The following is a 347-amino-acid chain: NADH-ubiquinone oxidoreductase chain 2 (347 aa).

The next 11 helical transmembrane spans lie at 1-21, 25-45, 55-75, 96-116, 123-143, 145-165, 178-198, 199-219, 237-257, 274-294, and 324-344; these read MNPL…LITA, HWFL…PVLT, AAIK…MAIL, LMIL…FWVP, TLTS…SIMY, IFPV…IMVG, ILAY…PYNP, NITI…FLAL, LTWL…LPPL, GTLI…YFYM, and LLLP…PLTF.

This sequence belongs to the complex I subunit 2 family. As to quaternary structure, core subunit of respiratory chain NADH dehydrogenase (Complex I) which is composed of 45 different subunits. Interacts with TMEM242.

It localises to the mitochondrion inner membrane. The catalysed reaction is a ubiquinone + NADH + 5 H(+)(in) = a ubiquinol + NAD(+) + 4 H(+)(out). In terms of biological role, core subunit of the mitochondrial membrane respiratory chain NADH dehydrogenase (Complex I) which catalyzes electron transfer from NADH through the respiratory chain, using ubiquinone as an electron acceptor. Essential for the catalytic activity and assembly of complex I. The protein is NADH-ubiquinone oxidoreductase chain 2 of Symphalangus syndactylus (Siamang).